Reading from the N-terminus, the 109-residue chain is Small ribosomal subunit protein bS6 (109 aa).

This sequence belongs to the bacterial ribosomal protein bS6 family.

Its function is as follows. Binds together with bS18 to 16S ribosomal RNA. The chain is Small ribosomal subunit protein bS6 from Ehrlichia ruminantium (strain Gardel).